Here is a 45-residue protein sequence, read N- to C-terminus: MIQRTLTGTNRKKTKRSGFRSRMLQTEEEKLLILDVMKKRYYLVK.

Positions 1–21 (MIQRTLTGTNRKKTKRSGFRS) are disordered. Residues 10–19 (NRKKTKRSGF) are compositionally biased toward basic residues.

Belongs to the bacterial ribosomal protein bL34 family.

It is found in the plastid. The protein resides in the chloroplast. This Cyanidium caldarium (Red alga) protein is Large ribosomal subunit protein bL34c (rpl34).